Reading from the N-terminus, the 260-residue chain is Exosome complex component Rrp4 (260 aa).

An S1 motif domain is found at 59 to 128; that stretch reads NDVVIGIVIV…NSMKVELALR (70 aa). The KH domain occupies 136 to 194; the sequence is KTGQIVEVEPVKVPRVIGHGGSMISMLKKETNCSIFVGQNGRIWIDGKDDDVELLSKAL.

Belongs to the RRP4 family. Component of the archaeal exosome complex. Forms a trimer of Rrp4 and/or Csl4 subunits. The trimer associates with a hexameric ring-like arrangement composed of 3 Rrp41-Rrp42 heterodimers.

The protein resides in the cytoplasm. Functionally, non-catalytic component of the exosome, which is a complex involved in RNA degradation. Increases the RNA binding and the efficiency of RNA degradation. Confers strong poly(A) specificity to the exosome. The polypeptide is Exosome complex component Rrp4 (Methanosarcina barkeri (strain Fusaro / DSM 804)).